Consider the following 577-residue polypeptide: Calcium-dependent protein kinase 22 (577 aa).

Residue Gly-2 is the site of N-myristoyl glycine attachment. The Protein kinase domain occupies Tyr-105–Leu-368. ATP-binding positions include Leu-111–Thr-119 and Lys-134. Asp-234 acts as the Proton acceptor in catalysis. The interval Ala-374–Val-404 is autoinhibitory domain. EF-hand domains are found at residues Glu-411–Pro-446, Val-447–Met-482, Ser-483–Pro-518, and Glu-520–Trp-553. Ca(2+) is bound by residues Asp-424, Asp-426, Ser-428, Asn-430, Asp-435, Asp-460, Asp-462, Asn-464, Thr-466, Glu-471, Asp-496, Asp-498, Asn-500, Glu-507, Asp-531, Asp-533, Asp-535, Arg-537, and Glu-542.

Belongs to the protein kinase superfamily. Ser/Thr protein kinase family. CDPK subfamily.

The protein resides in the membrane. It carries out the reaction L-seryl-[protein] + ATP = O-phospho-L-seryl-[protein] + ADP + H(+). It catalyses the reaction L-threonyl-[protein] + ATP = O-phospho-L-threonyl-[protein] + ADP + H(+). Activated by calcium. Autophosphorylation may play an important role in the regulation of the kinase activity. May play a role in signal transduction pathways that involve calcium as a second messenger. This is Calcium-dependent protein kinase 22 from Oryza sativa subsp. japonica (Rice).